The chain runs to 177 residues: ATP synthase subunit delta (177 aa).

It belongs to the ATPase delta chain family. As to quaternary structure, F-type ATPases have 2 components, F(1) - the catalytic core - and F(0) - the membrane proton channel. F(1) has five subunits: alpha(3), beta(3), gamma(1), delta(1), epsilon(1). F(0) has three main subunits: a(1), b(2) and c(10-14). The alpha and beta chains form an alternating ring which encloses part of the gamma chain. F(1) is attached to F(0) by a central stalk formed by the gamma and epsilon chains, while a peripheral stalk is formed by the delta and b chains.

It is found in the cell inner membrane. In terms of biological role, f(1)F(0) ATP synthase produces ATP from ADP in the presence of a proton or sodium gradient. F-type ATPases consist of two structural domains, F(1) containing the extramembraneous catalytic core and F(0) containing the membrane proton channel, linked together by a central stalk and a peripheral stalk. During catalysis, ATP synthesis in the catalytic domain of F(1) is coupled via a rotary mechanism of the central stalk subunits to proton translocation. Functionally, this protein is part of the stalk that links CF(0) to CF(1). It either transmits conformational changes from CF(0) to CF(1) or is implicated in proton conduction. In Vibrio alginolyticus, this protein is ATP synthase subunit delta.